An 896-amino-acid polypeptide reads, in one-letter code: NET1-associated nuclear protein 1 (896 aa).

WD repeat units follow at residues 295 to 334, 490 to 542, 552 to 595, and 605 to 645; these read WHID…QQFL, LQDP…TNWN, GISV…SNWC, and NHFS…ESLE.

In terms of assembly, interacts with snoRNA U3. Interacts with MPP10. Component of the ribosomal small subunit (SSU) processome composed of at least 40 protein subunits and snoRNA U3. In the absence of snoRNA3, forms a complex with other t-UTPs. This complex can associate with pre-18S ribosomal RNAs.

It is found in the nucleus. The protein resides in the nucleolus. In terms of biological role, involved in nucleolar processing of pre-18S ribosomal RNA. Required for optimal pre-ribosomal RNA transcription by RNA polymerase I together with a subset of U3 proteins required for transcription (t-UTPs). The chain is NET1-associated nuclear protein 1 (NAN1) from Saccharomyces cerevisiae (strain ATCC 204508 / S288c) (Baker's yeast).